A 295-amino-acid polypeptide reads, in one-letter code: Small ribosomal subunit biogenesis GTPase RsgA (295 aa).

Residues 65–223 (KNQLVRPPVA…VLDTPGFTAL (159 aa)) enclose the CP-type G domain. GTP is bound by residues 114–117 (NKVD) and 165–173 (GPSGVGKSS). Residues Cys246, Cys251, His253, and Cys259 each contribute to the Zn(2+) site.

The protein belongs to the TRAFAC class YlqF/YawG GTPase family. RsgA subfamily. Monomer. Associates with 30S ribosomal subunit, binds 16S rRNA. Zn(2+) is required as a cofactor.

It is found in the cytoplasm. Its function is as follows. One of several proteins that assist in the late maturation steps of the functional core of the 30S ribosomal subunit. Helps release RbfA from mature subunits. May play a role in the assembly of ribosomal proteins into the subunit. Circularly permuted GTPase that catalyzes slow GTP hydrolysis, GTPase activity is stimulated by the 30S ribosomal subunit. This is Small ribosomal subunit biogenesis GTPase RsgA from Caldanaerobacter subterraneus subsp. tengcongensis (strain DSM 15242 / JCM 11007 / NBRC 100824 / MB4) (Thermoanaerobacter tengcongensis).